A 65-amino-acid chain; its full sequence is uncharacterized protein (65 aa).

The segment at residues 1-65 (MIALSVCWQI…ETGIGYRFML (65 aa)) is a DNA-binding region (ompR/PhoB-type).

This is an uncharacterized protein from Escherichia coli (strain K12).